The following is a 613-amino-acid chain: Leucine-rich repeat receptor-like protein FASCIATED EAR2 (613 aa).

A signal peptide spans 1 to 28 (MLTATPLPHQLLATFLLVLASATQPAVP). Over 29–573 (ASTDRAALLA…WLGGWHGENG (545 aa)) the chain is Extracellular. LRR repeat units lie at residues 79–103 (TPSVAELSLRGLNLTGVIPAAPLAL), 104–128 (LRRLRTLDLSANALSGELPCSLPRS), 130–150 (LALDLSRNALSGAVPTCLPSS), 151–176 (LPALRTLNLSANFLRLPLSPRLSFPA), 178–199 (LAALDLSRNAISGAVPPRIVAD), 202–226 (NSALLLLDLSHNRFSGEIPAGIAAV), 227–250 (RSLQGLFLADNQLSGDIPPGIGNL), 251–274 (TYLQVLDLSNNRLSGSVPAGLAGC), 276–297 (QLLYLQLGGNQLSGALRPELDA), 298–322 (LASLKVLDLSNNKISGEIPLPLAGC), 324–346 (SLEVVDLSGNEISGELSSAVAKW), 347–370 (LSLKFLSLAGNQLSGHLPDWMFSF), 372–394 (LLQWLDLSSNKFVGFIPDGGFNV), 435–459 (VQATTGIDLSGNELCGEIPEGLVDM), 460–483 (KGLEYLNLSCNYLAGQIPAGLGGM), 484–507 (GRLHTLDFSHNGLSGEVPPGIAAM), and 508–531 (TVLEVLNLSYNSLSGPLPTTKFPG). Asn-91 carries an N-linked (GlcNAc...) asparagine glycan. A glycan (N-linked (GlcNAc...) asparagine) is linked at Asn-158. Asn-249 carries N-linked (GlcNAc...) asparagine glycosylation. An N-linked (GlcNAc...) asparagine glycan is attached at Asn-393. N-linked (GlcNAc...) asparagine glycosylation is present at Asn-466. Asn-514 carries N-linked (GlcNAc...) asparagine glycosylation. A helical transmembrane segment spans residues 574–597 (WVSLGAFCISTMTSFYVSLATLLC). Residues 598 to 613 (SSNARNFVFRPVRVEY) are Cytoplasmic-facing.

As to expression, expressed in ear primordia, vegetative apex and young leaf tissues. Barely detected in expanded leaf tissues and not expressed in roots.

The protein localises to the cell membrane. Functionally, receptor-like protein that regulates shoot meristem proliferation. Based on additive and synergistic phenotypes of double mutants, it is probable that unlike CLV1 and CLV2 in A.thaliana, FAE2 and TD1 do not function exclusively in a single pathway. This chain is Leucine-rich repeat receptor-like protein FASCIATED EAR2 (FEA2), found in Zea mays (Maize).